Consider the following 532-residue polypeptide: CTP synthase (532 aa).

The amidoligase domain stretch occupies residues 1 to 268 (MTTKYIFVTG…DEIVCDHLNL (268 aa)). Residue serine 14 coordinates CTP. Serine 14 provides a ligand contact to UTP. 15 to 20 (SLGKGI) lines the ATP pocket. Tyrosine 55 contributes to the L-glutamine binding site. Aspartate 72 is a binding site for ATP. Positions 72 and 142 each coordinate Mg(2+). Residues 149-151 (DIE), 189-194 (KSKPTQ), and lysine 225 each bind CTP. Residues 189–194 (KSKPTQ) and lysine 225 contribute to the UTP site. Residue 241 to 243 (RDA) coordinates ATP. One can recognise a Glutamine amidotransferase type-1 domain in the interval 293–532 (KIALVGKYVA…REFIQASLRK (240 aa)). Glycine 355 lines the L-glutamine pocket. Cysteine 382 functions as the Nucleophile; for glutamine hydrolysis in the catalytic mechanism. L-glutamine is bound by residues 383-386 (LGMQ), glutamate 406, and arginine 463. Active-site residues include histidine 508 and glutamate 510.

The protein belongs to the CTP synthase family. As to quaternary structure, homotetramer.

It catalyses the reaction UTP + L-glutamine + ATP + H2O = CTP + L-glutamate + ADP + phosphate + 2 H(+). It carries out the reaction L-glutamine + H2O = L-glutamate + NH4(+). The catalysed reaction is UTP + NH4(+) + ATP = CTP + ADP + phosphate + 2 H(+). It functions in the pathway pyrimidine metabolism; CTP biosynthesis via de novo pathway; CTP from UDP: step 2/2. Allosterically activated by GTP, when glutamine is the substrate; GTP has no effect on the reaction when ammonia is the substrate. The allosteric effector GTP functions by stabilizing the protein conformation that binds the tetrahedral intermediate(s) formed during glutamine hydrolysis. Inhibited by the product CTP, via allosteric rather than competitive inhibition. In terms of biological role, catalyzes the ATP-dependent amination of UTP to CTP with either L-glutamine or ammonia as the source of nitrogen. Regulates intracellular CTP levels through interactions with the four ribonucleotide triphosphates. This chain is CTP synthase, found in Halalkalibacterium halodurans (strain ATCC BAA-125 / DSM 18197 / FERM 7344 / JCM 9153 / C-125) (Bacillus halodurans).